Here is a 257-residue protein sequence, read N- to C-terminus: Protein TONNEAU 1b (257 aa).

The region spanning 73–105 (SGRLLSALICEYLDWAQLNHTLKVYQPECNSAK) is the LisH domain. Disordered regions lie at residues 148 to 216 (QVMG…EDMP) and 231 to 257 (LDRK…EGKD). Positions 187–199 (SVSASQASGAATS) are enriched in low complexity. 2 stretches are compositionally biased toward basic and acidic residues: residues 201 to 212 (YRKDESNWRYDT) and 244 to 257 (NVKD…EGKD).

Interacts with CEN1, LNG1/TRM2 and LNG2/TRM1 (via C-terminus).

It localises to the cytoplasm. The protein localises to the cytoskeleton. Involved in the control of the dynamic organization of the cortical cytoskeleton. May play a role in the organization of microtubule arrays at the centrosome through interaction with centrin 1 (CEN1). In Arabidopsis thaliana (Mouse-ear cress), this protein is Protein TONNEAU 1b (TON1B).